Reading from the N-terminus, the 144-residue chain is Large ribosomal subunit protein uL15 (144 aa).

Positions 1 to 53 are disordered; the sequence is MRLNTLSPAEGAKHSAKRLGRGIGSGLGKTGGRGHKGQKSRTGGGVRRGFEGG. The span at 21 to 31 shows a compositional bias: gly residues; it reads RGIGSGLGKTG.

Belongs to the universal ribosomal protein uL15 family. In terms of assembly, part of the 50S ribosomal subunit.

Functionally, binds to the 23S rRNA. This chain is Large ribosomal subunit protein uL15, found in Haemophilus influenzae (strain ATCC 51907 / DSM 11121 / KW20 / Rd).